Reading from the N-terminus, the 113-residue chain is Large ribosomal subunit protein uL22 (113 aa).

Belongs to the universal ribosomal protein uL22 family. As to quaternary structure, part of the 50S ribosomal subunit.

In terms of biological role, this protein binds specifically to 23S rRNA; its binding is stimulated by other ribosomal proteins, e.g. L4, L17, and L20. It is important during the early stages of 50S assembly. It makes multiple contacts with different domains of the 23S rRNA in the assembled 50S subunit and ribosome. Functionally, the globular domain of the protein is located near the polypeptide exit tunnel on the outside of the subunit, while an extended beta-hairpin is found that lines the wall of the exit tunnel in the center of the 70S ribosome. The protein is Large ribosomal subunit protein uL22 of Halothermothrix orenii (strain H 168 / OCM 544 / DSM 9562).